The sequence spans 372 residues: Protein zntB (372 aa).

The next 3 helical transmembrane spans lie at 15 to 35, 42 to 62, and 70 to 90; these read LIMCFLSGLSTAIGGLYVIFI, LLGHLLSFSSGVMIYISFMDL, and IGFYNANIWFFVGIIFFAVIL. Positions 99-166 are disordered; sequence ESGDSNHAHS…IAKSKNKKKS (68 aa). Residues 114–124 show a composition bias toward basic and acidic residues; the sequence is IEKHSSEKKEV. Residues 133 to 167 are a coiled coil; it reads NGKDKKQKQQKQKQQKQQQQQKQNIAKSKNKKKSK. Positions 137–146 are enriched in basic residues; it reads KKQKQQKQKQ. The span at 147–159 shows a compositional bias: low complexity; sequence QKQQQQQKQNIAK. Helical transmembrane passes span 170-192, 207-229, 237-257, 271-291, and 301-321; these read YLNSVGIATAIGVSLHNFPEGVA, LMLAIAAHNIPEGMAVAAPIFSA, FKYCLYSGLCEPVGAIIFGLI, LAAVAGIMVFMVIKELLPAAF, and FSNIIGMIFFFFSIHFLHSML. Positions 328-372 are disordered; the sequence is AGDGGHGHSHGGHGHSHGHGHSHGGHSHDSQHVESPQSSSFNAFA. A compositionally biased stretch (basic residues) spans 334 to 352; sequence GHSHGGHGHSHGHGHSHGG. Over residues 360-372 the composition is skewed to polar residues; it reads VESPQSSSFNAFA.

Belongs to the ZIP transporter (TC 2.A.5) family. ZupT subfamily.

The protein localises to the membrane. Its function is as follows. May transport divalent cations. May participate, with dstA, in the regulation of the differentiation of stalk cells during development. This chain is Protein zntB (zntB), found in Dictyostelium discoideum (Social amoeba).